A 74-amino-acid chain; its full sequence is NADH dehydrogenase [ubiquinone] 1 alpha subcomplex assembly factor 8 (74 aa).

One can recognise a CHCH domain in the interval 22 to 69 (LAACGAEASAYGKCVQASTAPGGRLSKDLCVREFEALRSCFAAAAKKT). 2 consecutive short sequence motifs (cx9C motif) follow at residues 25–35 (CGAEASAYGKC) and 51–61 (CVREFEALRSC). Disulfide bonds link Cys-25–Cys-61 and Cys-35–Cys-51.

In terms of assembly, interacts with NDUFAF5.

Its subcellular location is the mitochondrion. Functionally, involved in the assembly of mitochondrial NADH:ubiquinone oxidoreductase complex (complex I, MT-ND1). Required to stabilize NDUFAF5. In Mus musculus (Mouse), this protein is NADH dehydrogenase [ubiquinone] 1 alpha subcomplex assembly factor 8.